A 288-amino-acid polypeptide reads, in one-letter code: ATP synthase gamma chain (288 aa).

This sequence belongs to the ATPase gamma chain family. F-type ATPases have 2 components, CF(1) - the catalytic core - and CF(0) - the membrane proton channel. CF(1) has five subunits: alpha(3), beta(3), gamma(1), delta(1), epsilon(1). CF(0) has three main subunits: a, b and c.

It is found in the cell inner membrane. Its function is as follows. Produces ATP from ADP in the presence of a proton gradient across the membrane. The gamma chain is believed to be important in regulating ATPase activity and the flow of protons through the CF(0) complex. This Acidovorax ebreus (strain TPSY) (Diaphorobacter sp. (strain TPSY)) protein is ATP synthase gamma chain.